We begin with the raw amino-acid sequence, 1070 residues long: [F-actin]-monooxygenase MICAL1 (1070 aa).

Residues 1–489 are monooxygenase domain; it reads MASTISTNPA…RDLYDMEAKE (489 aa). FAD contacts are provided by residues C95, 114–116, 121–123, F181, Y293, and D393; these read EKR and RHN. Residue T475 is modified to Phosphothreonine. Positions 508-612 constitute a Calponin-homology (CH) domain; sequence VGSQEELLRW…YLSHFHSAFK (105 aa). Residues 643-690 form a disordered region; the sequence is QRTRTQENGEDAGGKKPRLEVKAETPSTEEPPVPKPDEPMTPPSQQQD. A compositionally biased stretch (basic and acidic residues) spans 646–665; that stretch reads RTQENGEDAGGKKPRLEVKA. A compositionally biased stretch (pro residues) spans 671 to 684; sequence EEPPVPKPDEPMTP. Residues 695–757 form the LIM zinc-binding domain; the sequence is DLCALCGQHL…LQHLPQTGHE (63 aa). Zn(2+) contacts are provided by C697, C700, H718, C721, C724, C727, C747, and H750. Disordered regions lie at residues 754–838 and 865–887; these read TGHE…RSCS and MEMGEEERSSSSEEETEEEEDVP. Basic and acidic residues predominate over residues 755 to 766; sequence GHEEDSSDRGPE. Polar residues predominate over residues 770–781; it reads LPMSSENNTPSG. Residues S793, S875, and S876 each carry the phosphoserine modification. A compositionally biased stretch (acidic residues) spans 876–887; the sequence is SEEETEEEEDVP. The segment at 904–1070 is important for interaction with RAB8A; the sequence is GTMNNYPTWR…ELASEPGVQG (167 aa). In terms of domain architecture, bMERB spans 921–1070; it reads KEEEMKRFCK…ELASEPGVQG (150 aa). A coiled-coil region spans residues 928 to 1030; the sequence is FCKAQAIQRR…EETLKTAADR (103 aa). Position 1060 is a phosphoserine (S1060).

It belongs to the Mical family. As to quaternary structure, interacts with STK38 and STK38L. Associates with the SH3 domain of NEDD9. Interacts with VIM and PLXNA3. Interacts with RAB1B, RAB8A, RAB10, RAB13 and RAB15 (in their GTP-bound forms); binding to RAB1B is of low affinity compared to other Rab proteins; at least in case of RAB8A and RAB10 can bind 2 molecules of the Rab proteins simultaneously. Interacts with GRAF1/ARHGAP26, GRAF2/ARHGAP10, RAB8A, RAB8B and RAB10; may bind simultaneously to GRAFs and Rabs and connects GRAFs to Rabs. Does not interact with RAB1 and RAB11A. The cofactor is FAD.

It is found in the cytoplasm. Its subcellular location is the cytoskeleton. The protein resides in the endosome membrane. The protein localises to the midbody. The enzyme catalyses L-methionyl-[F-actin] + NADPH + O2 + H(+) = L-methionyl-(R)-S-oxide-[F-actin] + NADP(+) + H2O. It catalyses the reaction NADPH + O2 + H(+) = H2O2 + NADP(+). Monooxygenase that promotes depolymerization of F-actin by mediating oxidation of specific methionine residues on actin to form methionine-sulfoxide, resulting in actin filament disassembly and preventing repolymerization. In the absence of actin, it also functions as a NADPH oxidase producing H(2)O(2). Acts as a cytoskeletal regulator that connects NEDD9 to intermediate filaments. Also acts as a negative regulator of apoptosis via its interaction with STK38 and STK38L; acts by antagonizing STK38 and STK38L activation by MST1/STK4. Involved in regulation of lamina-specific connectivity in the nervous system such as the development of lamina-restricted hippocampal connections. Through redox regulation of the actin cytoskeleton controls the intracellular distribution of secretory vesicles containing L1/neurofascin/NgCAM family proteins in neurons, thereby regulating their cell surface levels. May act as Rab effector protein and play a role in vesicle trafficking. Promotes endosomal tubule extension by associating with RAB8 (RAB8A or RAB8B), RAB10 and GRAF (GRAF1/ARHGAP26 or GRAF2/ARHGAP10) on the endosomal membrane which may connect GRAFs to Rabs, thereby participating in neosynthesized Rab8-Rab10-Rab11-dependent protein export. In Bos taurus (Bovine), this protein is [F-actin]-monooxygenase MICAL1 (MICAL1).